The following is a 450-amino-acid chain: Saccharopine dehydrogenase [NADP(+), L-glutamate-forming] (450 aa).

Residues 9 to 12 (SGFV), 32 to 34 (CRT), 54 to 55 (DV), Ile-75, 97 to 98 (TS), 124 to 126 (VDP), and Ser-174 contribute to the NADP(+) site. L-saccharopine is bound by residues 98 to 99 (SY) and Asp-125. L-saccharopine-binding positions include Arg-223 and 244 to 246 (TLR).

It belongs to the saccharopine dehydrogenase family. As to quaternary structure, homodimer.

It is found in the cytoplasm. It catalyses the reaction L-saccharopine + NADP(+) + H2O = (S)-2-amino-6-oxohexanoate + L-glutamate + NADPH + H(+). It functions in the pathway amino-acid biosynthesis; L-lysine biosynthesis via AAA pathway; L-lysine from L-alpha-aminoadipate (fungal route): step 2/3. In Schizosaccharomyces pombe (strain 972 / ATCC 24843) (Fission yeast), this protein is Saccharopine dehydrogenase [NADP(+), L-glutamate-forming].